A 1406-amino-acid polypeptide reads, in one-letter code: DNA-directed RNA polymerase subunit beta' (1406 aa).

Residues Cys-72, Cys-74, Cys-87, and Cys-90 each contribute to the Zn(2+) site. Residues Asp-462, Asp-464, and Asp-466 each contribute to the Mg(2+) site. 4 residues coordinate Zn(2+): Cys-816, Cys-891, Cys-898, and Cys-901.

Belongs to the RNA polymerase beta' chain family. As to quaternary structure, the RNAP catalytic core consists of 2 alpha, 1 beta, 1 beta' and 1 omega subunit. When a sigma factor is associated with the core the holoenzyme is formed, which can initiate transcription. It depends on Mg(2+) as a cofactor. The cofactor is Zn(2+).

It carries out the reaction RNA(n) + a ribonucleoside 5'-triphosphate = RNA(n+1) + diphosphate. Functionally, DNA-dependent RNA polymerase catalyzes the transcription of DNA into RNA using the four ribonucleoside triphosphates as substrates. This is DNA-directed RNA polymerase subunit beta' from Psychrobacter arcticus (strain DSM 17307 / VKM B-2377 / 273-4).